We begin with the raw amino-acid sequence, 1220 residues long: DNA-directed RNA polymerase subunit beta' (1220 aa).

4 residues coordinate Zn(2+): Cys-61, Cys-63, Cys-76, and Cys-79. Mg(2+) is bound by residues Asp-450, Asp-452, and Asp-454. Positions 1197-1220 (QPESESEEASDIPKLDDVAKTFDN) are disordered. The span at 1207–1220 (DIPKLDDVAKTFDN) shows a compositional bias: basic and acidic residues.

This sequence belongs to the RNA polymerase beta' chain family. The RNAP catalytic core consists of 2 alpha, 1 beta, 1 beta' and 1 omega subunit. When a sigma factor is associated with the core the holoenzyme is formed, which can initiate transcription. It depends on Mg(2+) as a cofactor. Zn(2+) serves as cofactor.

The enzyme catalyses RNA(n) + a ribonucleoside 5'-triphosphate = RNA(n+1) + diphosphate. In terms of biological role, DNA-dependent RNA polymerase catalyzes the transcription of DNA into RNA using the four ribonucleoside triphosphates as substrates. The protein is DNA-directed RNA polymerase subunit beta' of Leuconostoc mesenteroides subsp. mesenteroides (strain ATCC 8293 / DSM 20343 / BCRC 11652 / CCM 1803 / JCM 6124 / NCDO 523 / NBRC 100496 / NCIMB 8023 / NCTC 12954 / NRRL B-1118 / 37Y).